Reading from the N-terminus, the 440-residue chain is tRNA-2-methylthio-N(6)-dimethylallyladenosine synthase (440 aa).

The 117-residue stretch at 4 to 120 (NYVYIETFGC…LNDMVLAAER (117 aa)) folds into the MTTase N-terminal domain. 6 residues coordinate [4Fe-4S] cluster: C13, C49, C83, C158, C162, and C165. Residues 144–374 (GTARISSFVT…QALQKRTTME (231 aa)) enclose the Radical SAM core domain. The region spanning 377 to 439 (DVLLGTRQTV…QNSLLGELLP (63 aa)) is the TRAM domain.

This sequence belongs to the methylthiotransferase family. MiaB subfamily. As to quaternary structure, monomer. The cofactor is [4Fe-4S] cluster.

It localises to the cytoplasm. The enzyme catalyses N(6)-dimethylallyladenosine(37) in tRNA + (sulfur carrier)-SH + AH2 + 2 S-adenosyl-L-methionine = 2-methylsulfanyl-N(6)-dimethylallyladenosine(37) in tRNA + (sulfur carrier)-H + 5'-deoxyadenosine + L-methionine + A + S-adenosyl-L-homocysteine + 2 H(+). In terms of biological role, catalyzes the methylthiolation of N6-(dimethylallyl)adenosine (i(6)A), leading to the formation of 2-methylthio-N6-(dimethylallyl)adenosine (ms(2)i(6)A) at position 37 in tRNAs that read codons beginning with uridine. The chain is tRNA-2-methylthio-N(6)-dimethylallyladenosine synthase from Pelobacter propionicus (strain DSM 2379 / NBRC 103807 / OttBd1).